A 508-amino-acid chain; its full sequence is Light-independent protochlorophyllide reductase subunit B (508 aa).

Residue aspartate 36 participates in [4Fe-4S] cluster binding. Residue aspartate 294 is the Proton donor of the active site. Substrate is bound at residue 429-430 (GM).

This sequence belongs to the ChlB/BchB/BchZ family. Protochlorophyllide reductase is composed of three subunits; ChlL, ChlN and ChlB. Forms a heterotetramer of two ChlB and two ChlN subunits. It depends on [4Fe-4S] cluster as a cofactor.

The catalysed reaction is chlorophyllide a + oxidized 2[4Fe-4S]-[ferredoxin] + 2 ADP + 2 phosphate = protochlorophyllide a + reduced 2[4Fe-4S]-[ferredoxin] + 2 ATP + 2 H2O. It participates in porphyrin-containing compound metabolism; chlorophyll biosynthesis (light-independent). Component of the dark-operative protochlorophyllide reductase (DPOR) that uses Mg-ATP and reduced ferredoxin to reduce ring D of protochlorophyllide (Pchlide) to form chlorophyllide a (Chlide). This reaction is light-independent. The NB-protein (ChlN-ChlB) is the catalytic component of the complex. This Nostoc sp. (strain PCC 7120 / SAG 25.82 / UTEX 2576) protein is Light-independent protochlorophyllide reductase subunit B.